A 393-amino-acid chain; its full sequence is Yellow-related salivary protein SP03B (393 aa).

The first 18 residues, 1 to 18 (MKIFLCLIAVVFLQGVVG), serve as a signal peptide directing secretion. N29 carries N-linked (GlcNAc...) asparagine glycosylation.

Belongs to the major royal jelly protein family. In terms of tissue distribution, female salivary gland (at protein level).

Its subcellular location is the secreted. Probably modulates blood feeding of sand flies on vertebrate species by binding and sequestering different mediators involved in the host response. Binds biogenic amines. Binds serotonin with high affinity. Poorly binds histamine. Does not bind dopamine, noradrenaline, adrenaline and octopamine. The polypeptide is Yellow-related salivary protein SP03B (Phlebotomus perniciosus (Phlebotomine sand fly)).